A 494-amino-acid polypeptide reads, in one-letter code: Probable cytosol aminopeptidase (494 aa).

Positions 260 and 265 each coordinate Mn(2+). Lys-272 is an active-site residue. Residues Asp-283, Asp-342, and Glu-344 each contribute to the Mn(2+) site. The active site involves Arg-346.

Belongs to the peptidase M17 family. It depends on Mn(2+) as a cofactor.

It localises to the cytoplasm. It catalyses the reaction Release of an N-terminal amino acid, Xaa-|-Yaa-, in which Xaa is preferably Leu, but may be other amino acids including Pro although not Arg or Lys, and Yaa may be Pro. Amino acid amides and methyl esters are also readily hydrolyzed, but rates on arylamides are exceedingly low.. It carries out the reaction Release of an N-terminal amino acid, preferentially leucine, but not glutamic or aspartic acids.. Its function is as follows. Presumably involved in the processing and regular turnover of intracellular proteins. Catalyzes the removal of unsubstituted N-terminal amino acids from various peptides. The polypeptide is Probable cytosol aminopeptidase (Bacillus cereus (strain ATCC 14579 / DSM 31 / CCUG 7414 / JCM 2152 / NBRC 15305 / NCIMB 9373 / NCTC 2599 / NRRL B-3711)).